Consider the following 360-residue polypeptide: DNA replication and repair protein RecF (360 aa).

30–37 is a binding site for ATP; sequence GHNGSGKT.

It belongs to the RecF family.

It localises to the cytoplasm. The RecF protein is involved in DNA metabolism; it is required for DNA replication and normal SOS inducibility. RecF binds preferentially to single-stranded, linear DNA. It also seems to bind ATP. This chain is DNA replication and repair protein RecF, found in Shewanella denitrificans (strain OS217 / ATCC BAA-1090 / DSM 15013).